Reading from the N-terminus, the 650-residue chain is Serine/threonine-protein kinase oca2 (650 aa).

Polar residues predominate over residues 1-14 (MSVTPPNVQFNLNG). Disordered regions lie at residues 1–210 (MSVT…PHDI) and 222–288 (HHGK…KSSA). Ser72 carries the phosphoserine modification. Over residues 78 to 98 (NHIDPKLAEDRYRSSAARHFE) the composition is skewed to basic and acidic residues. The segment covering 140-154 (PSGSTGYTSPALSQN) has biased composition (polar residues). Basic residues-rich tracts occupy residues 222-231 (HHGKHGHHGH) and 245-257 (HDKHDKHDKHEKH). Over residues 258 to 279 (HSSLDLRRFFKSHQKTDKEKKP) the composition is skewed to basic and acidic residues. Ser286 carries the phosphoserine modification. In terms of domain architecture, Protein kinase spans 302–614 (GKFGRMLGSG…IHRVFADNWI (313 aa)). Residues 308–316 (LGSGAGGSV) and Lys331 each bind ATP. Asp425 functions as the Proton acceptor in the catalytic mechanism. A disordered region spans residues 549-570 (PIRKTDESHSPNSKTDNSSTHK).

The protein belongs to the protein kinase superfamily. Ser/Thr protein kinase family.

The protein localises to the cytoplasm. It carries out the reaction L-seryl-[protein] + ATP = O-phospho-L-seryl-[protein] + ADP + H(+). The catalysed reaction is L-threonyl-[protein] + ATP = O-phospho-L-threonyl-[protein] + ADP + H(+). Overexpression causes cell cycle arrest. The sequence is that of Serine/threonine-protein kinase oca2 from Schizosaccharomyces pombe (strain 972 / ATCC 24843) (Fission yeast).